The sequence spans 219 residues: Ras-related protein Rab-32A (219 aa).

22 to 29 (GDIGTGKT) lines the GTP pocket. Positions 44-52 (YKSTIGVDF) match the Effector region motif. GTP-binding positions include 71-75 (DIAGQ) and 134-137 (NKCD). The segment at 192 to 219 (NQPIEGTIQPGDLNKQPQPTSTGPSCCK) is disordered. The segment covering 206–219 (KQPQPTSTGPSCCK) has biased composition (polar residues). S-geranylgeranyl cysteine attachment occurs at residues C217 and C218.

Belongs to the small GTPase superfamily. Rab family.

This chain is Ras-related protein Rab-32A (rab32A), found in Dictyostelium discoideum (Social amoeba).